The chain runs to 889 residues: Mixed-linked glucan synthase 2 (889 aa).

Residues 34-53 (AGADGQNGRRSPVAKRVNDG) form a disordered region. 2 helical membrane passes run 93-113 (ILHP…AFFA) and 123-143 (GVWL…SWVL). Residue Asp-213 is part of the active site. Positions 265 to 293 (ELMSDHRRVRREYEEFKVRIDSLSSTIRQ) form a coiled coil. Asp-411 and Asp-413 together coordinate substrate. Asp-579 is a catalytic residue. 6 helical membrane-spanning segments follow: residues 655 to 675 (TYPI…MWLI), 685 to 705 (FGEY…IGMF), 723 to 743 (FYMI…ALKL), 777 to 797 (LLIP…VAVG), 811 to 831 (LAVL…PFAL), and 842 to 862 (AVLF…YVAF).

It belongs to the glycosyltransferase 2 family. Plant cellulose synthase-like F subfamily.

Its subcellular location is the golgi apparatus membrane. In terms of biological role, catalyzes both beta-1,3 and beta-1,4 glycosidic linkage on beta-D-glucan. Essential for (1,3;1,4)-beta-D-glucans synthesis in grasses and cereals (Poaceae). The mixed-linked glucans (which are not present in walls of dicotyledons or most other monocotyledonous plants) are particularly important constituents of the walls of the starchy endosperm and aleurone cells of cereal grains such as oats, wheat, rice and barley. They can account for up to 70% by weight of the wall. The sequence is that of Mixed-linked glucan synthase 2 (CSLF2) from Oryza sativa subsp. japonica (Rice).